Consider the following 212-residue polypeptide: Thymidylate kinase (212 aa).

11 to 18 (GPEGAGKT) is a binding site for ATP.

It belongs to the thymidylate kinase family.

The catalysed reaction is dTMP + ATP = dTDP + ADP. In terms of biological role, phosphorylation of dTMP to form dTDP in both de novo and salvage pathways of dTTP synthesis. This is Thymidylate kinase from Streptococcus pneumoniae (strain P1031).